The sequence spans 253 residues: 5'-nucleotidase SurE (253 aa).

D8, D9, S39, and N92 together coordinate a divalent metal cation.

The protein belongs to the SurE nucleotidase family. It depends on a divalent metal cation as a cofactor.

It localises to the cytoplasm. The catalysed reaction is a ribonucleoside 5'-phosphate + H2O = a ribonucleoside + phosphate. Nucleotidase that shows phosphatase activity on nucleoside 5'-monophosphates. The sequence is that of 5'-nucleotidase SurE from Burkholderia pseudomallei (strain 1710b).